A 474-amino-acid polypeptide reads, in one-letter code: tRNA-2-methylthio-N(6)-dimethylallyladenosine synthase (474 aa).

The region spanning 3 to 120 (KKLHIKTWGC…LPEMINSVRG (118 aa)) is the MTTase N-terminal domain. Cys12, Cys49, Cys83, Cys157, Cys161, and Cys164 together coordinate [4Fe-4S] cluster. One can recognise a Radical SAM core domain in the interval 143-375 (RAEGPTAFVS…QERINQQAMA (233 aa)). One can recognise a TRAM domain in the interval 378–441 (RRMLGTTQRI…PNSLRGKVVR (64 aa)).

The protein belongs to the methylthiotransferase family. MiaB subfamily. As to quaternary structure, monomer. [4Fe-4S] cluster is required as a cofactor.

The protein resides in the cytoplasm. The catalysed reaction is N(6)-dimethylallyladenosine(37) in tRNA + (sulfur carrier)-SH + AH2 + 2 S-adenosyl-L-methionine = 2-methylsulfanyl-N(6)-dimethylallyladenosine(37) in tRNA + (sulfur carrier)-H + 5'-deoxyadenosine + L-methionine + A + S-adenosyl-L-homocysteine + 2 H(+). Catalyzes the methylthiolation of N6-(dimethylallyl)adenosine (i(6)A), leading to the formation of 2-methylthio-N6-(dimethylallyl)adenosine (ms(2)i(6)A) at position 37 in tRNAs that read codons beginning with uridine. The sequence is that of tRNA-2-methylthio-N(6)-dimethylallyladenosine synthase from Escherichia coli (strain SMS-3-5 / SECEC).